A 642-amino-acid polypeptide reads, in one-letter code: ATP-dependent rRNA helicase spb4 (642 aa).

A Q motif motif is present at residues 14–42; it reads WDGVTPALSEWVLDAVASMGFTRMTPVQA. The Helicase ATP-binding domain maps to 45–250; that stretch reads IPLFMAHKDV…RVGLRNPVKV (206 aa). ATP is bound at residue 58–65; that stretch reads AVTGSGKT. The DEAD box signature appears at 198–201; that stretch reads DEAD. The Helicase C-terminal domain occupies 284-438; the sequence is AIKHILYSLE…TLTITDADAA (155 aa). Residues 522–625 are a coiled coil; the sequence is AYKDKQREKR…RLLRRAAKDK (104 aa). Basic and acidic residues-rich tracts occupy residues 527 to 536 and 577 to 628; these read QREKRRKEQV and AKQA…KESK. The interval 527 to 642 is disordered; the sequence is QREKRRKEQV…DDDDEFKGFD (116 aa). Residues 632 to 642 show a composition bias toward acidic residues; that stretch reads GDDDDEFKGFD.

Belongs to the DEAD box helicase family. DDX55/SPB4 subfamily. In terms of assembly, component of pre-60S ribosomal complexes.

It is found in the nucleus. The protein localises to the nucleolus. It carries out the reaction ATP + H2O = ADP + phosphate + H(+). Its function is as follows. ATP-binding RNA helicase involved in the biogenesis of 60S ribosomal subunits. Binds 90S pre-ribosomal particles and dissociates from pre-60S ribosomal particles after processing of 27SB pre-rRNA. Required for the normal formation of 18S rRNA through the processing of pre-rRNAs at sites A0, A1 and A2, and the normal formation of 25S and 5.8S rRNAs through the processing of pre-rRNAs at sites C1 and C2. This chain is ATP-dependent rRNA helicase spb4, found in Aspergillus niger (strain ATCC MYA-4892 / CBS 513.88 / FGSC A1513).